A 201-amino-acid polypeptide reads, in one-letter code: Endoribonuclease YbeY (201 aa).

Zn(2+) contacts are provided by H120, H124, and H130. The interval 151 to 201 (DGADGADGADGARGAADGAADGGEGRRGDQGRRGDQGRGGGAGEPPAAPAR) is disordered. Residues 173-186 (GEGRRGDQGRRGDQ) are compositionally biased toward basic and acidic residues.

Belongs to the endoribonuclease YbeY family. Zn(2+) serves as cofactor.

The protein resides in the cytoplasm. Functionally, single strand-specific metallo-endoribonuclease involved in late-stage 70S ribosome quality control and in maturation of the 3' terminus of the 16S rRNA. This chain is Endoribonuclease YbeY, found in Frankia casuarinae (strain DSM 45818 / CECT 9043 / HFP020203 / CcI3).